A 314-amino-acid chain; its full sequence is Protein nutcracker (314 aa).

Positions 1 to 62 are disordered; sequence MSDTKSEIEG…PRLIQEKSTQ (62 aa). The span at 21 to 34 shows a compositional bias: low complexity; the sequence is QQQQQPQQQQNEQQ. A required for interaction with skpA and Cul1, but not with PI31 region spans residues 257-314; the sequence is MQMEMKLQPSLLGLPDELYFEIFRYLDKSQLNVVARVNRHLHFYSKEVERKRLKGGRS. Positions 264-309 constitute an F-box domain; the sequence is QPSLLGLPDELYFEIFRYLDKSQLNVVARVNRHLHFYSKEVERKRL.

Component of an SCF (SKP1-CUL1-F-box protein) E3 ubiquitin-protein ligase complex, at least composed of ntc, skpA and Cul1. Interacts (via F-box domain) with skpA and Cul1. Interacts with Prosalpha7 and PI31. Interacts with Bruce. As to expression, expressed in testis (at protein level).

It localises to the cytoplasm. Functionally, functions together with PI31 to control non-apoptotic caspase activation during sperm individualization. Positively regulates PI31 stability. The polypeptide is Protein nutcracker (Drosophila melanogaster (Fruit fly)).